The sequence spans 62 residues: Large ribosomal subunit protein bL33 (62 aa).

The protein belongs to the bacterial ribosomal protein bL33 family.

This Parabacteroides distasonis (strain ATCC 8503 / DSM 20701 / CIP 104284 / JCM 5825 / NCTC 11152) protein is Large ribosomal subunit protein bL33.